A 283-amino-acid polypeptide reads, in one-letter code: Adenylate kinase 2, chloroplastic (283 aa).

The transit peptide at 1 to 59 (MTGCVNSISPPPVTLYRHRASPSRSSFSLSGDALHSLYRHRRVSRSPSIIAPKFQIVAA) directs the protein to the chloroplast. ATP is bound at residue 74-79 (ASGKGT). The interval 94–123 (SAGDLLRAEIASGSENGRRAKEHMEKGQLV) is NMP. AMP is bound by residues Arg100, 121 to 123 (QLV), 150 to 153 (GYPR), and Gln157. An LID region spans residues 187–220 (GRRLDPVTGKIYHLKYSPPETEEIAVRLTQRFDD). Position 188 (Arg188) interacts with ATP. AMP-binding residues include Arg217 and Arg228.

It belongs to the adenylate kinase family. In terms of assembly, monomer.

The protein resides in the plastid. It is found in the chloroplast stroma. The catalysed reaction is AMP + ATP = 2 ADP. In terms of biological role, catalyzes the reversible transfer of the terminal phosphate group between ATP and AMP. Plays an important role in cellular energy homeostasis and in adenine nucleotide metabolism. Plays a major role in the equilibration of adenylates and de novo synthesis of ADP in the plastid stroma. The protein is Adenylate kinase 2, chloroplastic of Arabidopsis thaliana (Mouse-ear cress).